Here is an 821-residue protein sequence, read N- to C-terminus: Centrosomal protein of 95 kDa (821 aa).

Disordered regions lie at residues 310-354 (TLCK…FPQK), 390-474 (ATGE…DTHH), and 514-550 (KEAF…SSKA). Basic and acidic residues-rich tracts occupy residues 325–340 (ESSK…RSEN) and 390–410 (ATGE…HSAN). Basic residues predominate over residues 427-441 (RKPRPGFSMHRKAPY). Ser-445, Ser-447, and Ser-449 each carry phosphoserine. Coiled-coil stretches lie at residues 578-627 (LTKM…VKKE) and 695-789 (LQIQ…DDDA).

The protein resides in the cytoplasm. It localises to the cytoskeleton. Its subcellular location is the microtubule organizing center. It is found in the centrosome. The protein localises to the spindle pole. This chain is Centrosomal protein of 95 kDa (Cep95), found in Rattus norvegicus (Rat).